A 401-amino-acid polypeptide reads, in one-letter code: 8-amino-7-oxononanoate synthase (401 aa).

Arg-19 is a binding site for substrate. 106-107 (GY) is a pyridoxal 5'-phosphate binding site. Residue His-131 coordinates substrate. Pyridoxal 5'-phosphate contacts are provided by Ser-176, His-204, and Thr-233. Lys-236 carries the post-translational modification N6-(pyridoxal phosphate)lysine. Thr-350 is a substrate binding site.

It belongs to the class-II pyridoxal-phosphate-dependent aminotransferase family. BioF subfamily. In terms of assembly, homodimer. Pyridoxal 5'-phosphate is required as a cofactor.

The enzyme catalyses 6-carboxyhexanoyl-[ACP] + L-alanine + H(+) = (8S)-8-amino-7-oxononanoate + holo-[ACP] + CO2. It participates in cofactor biosynthesis; biotin biosynthesis. Catalyzes the decarboxylative condensation of pimeloyl-[acyl-carrier protein] and L-alanine to produce 8-amino-7-oxononanoate (AON), [acyl-carrier protein], and carbon dioxide. The protein is 8-amino-7-oxononanoate synthase of Pseudomonas paraeruginosa (strain DSM 24068 / PA7) (Pseudomonas aeruginosa (strain PA7)).